Here is a 364-residue protein sequence, read N- to C-terminus: Aminomethyltransferase (364 aa).

The protein belongs to the GcvT family. In terms of assembly, the glycine cleavage system is composed of four proteins: P, T, L and H.

It catalyses the reaction N(6)-[(R)-S(8)-aminomethyldihydrolipoyl]-L-lysyl-[protein] + (6S)-5,6,7,8-tetrahydrofolate = N(6)-[(R)-dihydrolipoyl]-L-lysyl-[protein] + (6R)-5,10-methylene-5,6,7,8-tetrahydrofolate + NH4(+). The glycine cleavage system catalyzes the degradation of glycine. This is Aminomethyltransferase from Thermotoga sp. (strain RQ2).